The following is a 958-amino-acid chain: Nuclear factor NF-kappa-B p100 subunit (958 aa).

Residues 40 to 230 enclose the RHD domain; it reads LLMSYLSIIE…DPIHDSKSPG (191 aa). A Nuclear localization signal motif is present at residues 343–347; sequence RKRRK. Disordered regions lie at residues 350–374 and 411–442; these read PTFN…SFGQ and CSAT…QTDS. Residues 352–390 form a GRR region; the sequence is FNNHFYGGGSPMGGAPPGSSFGQGGGSNINYQYTGMNSA. The span at 357–374 shows a compositional bias: gly residues; sequence YGGGSPMGGAPPGSSFGQ. Polar residues predominate over residues 412 to 425; sequence SATNSSEKNQQPSI. ANK repeat units follow at residues 500–529, 539–568, 572–603, 610–639, 644–674, and 678–707; these read NGDT…SIPN, LQQT…DPTI, YGNS…QKNL, HGLS…NVNS, SGKS…DINA, and GGNT…NVLS. A disordered region spans residues 705–766; it reads VLSENDEPVN…SAEEMHRREQ (62 aa). Acidic residues predominate over residues 724–734; sequence SESDSDVQMDT. Basic and acidic residues predominate over residues 753-766; it reads ECEHSAEEMHRREQ. The region spanning 815 to 901 is the Death domain; sequence VNVLALETNT…EGVELLCKSE (87 aa). Positions 904-916 are enriched in basic and acidic residues; the sequence is AKHHSPAESKNDS. Positions 904–958 are disordered; it reads AKHHSPAESKNDSAYESQSMEVDQSSGNLMDDSQKQTIPVSAAELCPTTEPTIGQ. The segment covering 917–931 has biased composition (polar residues); that stretch reads AYESQSMEVDQSSGN.

As to quaternary structure, active NF-kappa-B is a heterodimer of an about 52 kDa DNA-binding subunit and the weak DNA-binding subunit p65. Two heterodimers might form a labile tetramer. Post-translationally, while translation occurs, the particular unfolded structure after the GRR repeat promotes the generation of p52 making it an acceptable substrate for the proteasome. This process is known as cotranslational processing. The processed form is active and the unprocessed form acts as an inhibitor (I kappa B-like), being able to form cytosolic complexes with NF-kappa B, trapping it in the cytoplasm. Complete folding of the region downstream of the GRR repeat precludes processing. Constitutive processing is tightly suppressed by its C-terminal processing inhibitory domain, named PID, which contains the death domain. Expressed in spleen.

It is found in the nucleus. It localises to the cytoplasm. Its function is as follows. Appears to have dual functions such as cytoplasmic retention of attached NF-kappa-B proteins and generation of p52 by a cotranslational processing. The proteasome-mediated process ensures the production of both p52 and p100 and preserves their independent function. p52 binds to the kappa-B consensus sequence 5'-GGRNNYYCC-3', located in the enhancer region of genes involved in immune response and acute phase reactions. In concert with RELB, may play a role in the regulation of the circadian clock. The protein is Nuclear factor NF-kappa-B p100 subunit (nfkb2) of Xenopus laevis (African clawed frog).